Reading from the N-terminus, the 468-residue chain is Glutamate--tRNA ligase (468 aa).

A 'HIGH' region motif is present at residues 8–18 (PSPTGFLHVGG). Positions 97, 99, 124, and 126 each coordinate Zn(2+). Positions 236–240 (KLSKR) match the 'KMSKS' region motif. Lys-239 contributes to the ATP binding site.

This sequence belongs to the class-I aminoacyl-tRNA synthetase family. Glutamate--tRNA ligase type 1 subfamily. Monomer. Requires Zn(2+) as cofactor.

It is found in the cytoplasm. The enzyme catalyses tRNA(Glu) + L-glutamate + ATP = L-glutamyl-tRNA(Glu) + AMP + diphosphate. In terms of biological role, catalyzes the attachment of glutamate to tRNA(Glu) in a two-step reaction: glutamate is first activated by ATP to form Glu-AMP and then transferred to the acceptor end of tRNA(Glu). This Francisella tularensis subsp. mediasiatica (strain FSC147) protein is Glutamate--tRNA ligase.